The chain runs to 836 residues: Lon protease (836 aa).

The region spanning 41–233 (LPVLPLRNTV…RLIHFLNREV (193 aa)) is the Lon N-terminal domain. Residue 385–392 (GPPGVGKT) participates in ATP binding. One can recognise a Lon proteolytic domain in the interval 627–811 (VMLSGVAVGL…DDLIDYVLEP (185 aa)). Active-site residues include serine 714 and lysine 757. Residues 816–836 (APQFKVEDKDHTPETTGNESE) are disordered.

It belongs to the peptidase S16 family. As to quaternary structure, homohexamer. Organized in a ring with a central cavity.

It is found in the cytoplasm. It carries out the reaction Hydrolysis of proteins in presence of ATP.. Functionally, ATP-dependent serine protease that mediates the selective degradation of mutant and abnormal proteins as well as certain short-lived regulatory proteins. Required for cellular homeostasis and for survival from DNA damage and developmental changes induced by stress. Degrades polypeptides processively to yield small peptide fragments that are 5 to 10 amino acids long. Binds to DNA in a double-stranded, site-specific manner. The polypeptide is Lon protease (Chloroherpeton thalassium (strain ATCC 35110 / GB-78)).